Consider the following 310-residue polypeptide: Deoxypodophyllotoxin synthase (310 aa).

One can recognise a Fe2OG dioxygenase domain in the interval 159–258 (STNYLLHFMR…RLSTSSFSFP (100 aa)). Residues H184, D186, and H239 each coordinate Fe cation. R249 is a 2-oxoglutarate binding site.

It belongs to the iron/ascorbate-dependent oxidoreductase family. Requires Fe(2+) as cofactor. In terms of tissue distribution, mostly expressed in leaves and stems.

The catalysed reaction is (-)-yatein + 2-oxoglutarate + O2 = (-)-deoxypodophyllotoxin + succinate + CO2 + H2O. The protein operates within aromatic compound metabolism; phenylpropanoid biosynthesis. Functionally, 2-oxoglutarate-dependent dioxygenase involved in the biosynthesis of etoposide, a chemotherapeutic compound of the topoisomerase inhibitor family. Catalyzes the conversion of yatein to deoxypodophyllotoxin. Can also use, to some extent, demethylyatein as substrate. The sequence is that of Deoxypodophyllotoxin synthase from Sinopodophyllum hexandrum (Himalayan may apple).